The chain runs to 230 residues: Orotidine 5'-phosphate decarboxylase (230 aa).

Substrate contacts are provided by residues Asp-11, Lys-34, 61-70, Thr-117, Arg-179, Gln-188, Gly-208, and Arg-209; that span reads DLKLHDIPNT. Lys-63 functions as the Proton donor in the catalytic mechanism.

This sequence belongs to the OMP decarboxylase family. Type 1 subfamily. Homodimer.

The catalysed reaction is orotidine 5'-phosphate + H(+) = UMP + CO2. It functions in the pathway pyrimidine metabolism; UMP biosynthesis via de novo pathway; UMP from orotate: step 2/2. Functionally, catalyzes the decarboxylation of orotidine 5'-monophosphate (OMP) to uridine 5'-monophosphate (UMP). This is Orotidine 5'-phosphate decarboxylase from Streptococcus mutans serotype c (strain ATCC 700610 / UA159).